The following is a 299-amino-acid chain: Trimeric intracellular cation channel type A (299 aa).

The Lumenal segment spans residues methionine 1–arginine 18. A helical transmembrane segment spans residues valine 19–tyrosine 39. At glutamate 40–proline 51 the chain is on the cytoplasmic side. A helical transmembrane segment spans residues isoleucine 52–leucine 72. The Lumenal segment spans residues leucine 73–serine 85. A Ca(2+)-binding site is contributed by glycine 74. Residues serine 86–tyrosine 106 form a helical membrane-spanning segment. The Cytoplasmic segment spans residues lysine 107 to glycine 144. Lysine 122 and arginine 126 together coordinate a 1,2-diacyl-sn-glycero-3-phospho-(1D-myo-inositol-4,5-bisphosphate). The helical transmembrane segment at tryptophan 145–phenylalanine 165 threads the bilayer. The Lumenal portion of the chain corresponds to glutamate 166 to asparagine 178. Residues glutamate 179 to leucine 199 form a helical membrane-spanning segment. Over glutamine 200–lysine 209 the chain is Cytoplasmic. Residues alanine 210–threonine 230 traverse the membrane as a helical segment. The Lumenal portion of the chain corresponds to histidine 231 to serine 234. The chain crosses the membrane as a helical span at residues serine 235–glycine 255. Residues aspartate 256–aspartate 299 are Cytoplasmic-facing. Positions aspartate 260–aspartate 299 are disordered. A compositionally biased stretch (basic and acidic residues) spans lysine 281–serine 290.

The protein belongs to the TMEM38 family. In terms of assembly, homotrimer; conformation seems to be controled by binding to diacylglycerol (DAG).

It is found in the sarcoplasmic reticulum membrane. The protein resides in the nucleus membrane. It catalyses the reaction K(+)(in) = K(+)(out). With respect to regulation, channel activity is activated by a change of voltage within the sarcoplasmic reticulum lumen and blocked by luminal high Ca(2+) levels. Intracellular monovalent cation channel required for maintenance of rapid intracellular calcium release. Acts as a potassium counter-ion channel that functions in synchronization with calcium release from intracellular stores. Opened by a change of voltage within the sarcoplasmic reticulum lumen. In Homo sapiens (Human), this protein is Trimeric intracellular cation channel type A.